A 361-amino-acid polypeptide reads, in one-letter code: Glutamate 5-kinase (361 aa).

Lysine 7 lines the ATP pocket. 3 residues coordinate substrate: serine 47, aspartate 134, and asparagine 146. Residues 166 to 167 and 209 to 215 each bind ATP; these read TD and TGGMTTK. In terms of domain architecture, PUA spans 274-345; the sequence is LGTLQLDEGA…EAIETQMSTN (72 aa).

The protein belongs to the glutamate 5-kinase family.

Its subcellular location is the cytoplasm. It carries out the reaction L-glutamate + ATP = L-glutamyl 5-phosphate + ADP. The protein operates within amino-acid biosynthesis; L-proline biosynthesis; L-glutamate 5-semialdehyde from L-glutamate: step 1/2. Catalyzes the transfer of a phosphate group to glutamate to form L-glutamate 5-phosphate. This is Glutamate 5-kinase from Prochlorococcus marinus (strain MIT 9313).